The primary structure comprises 186 residues: Ribosome-recycling factor (186 aa).

2 stretches are compositionally biased toward basic and acidic residues: residues Arg-134–Glu-169 and Ala-176–Asp-186. The segment at Arg-134–Asp-186 is disordered.

It belongs to the RRF family.

It is found in the cytoplasm. Responsible for the release of ribosomes from messenger RNA at the termination of protein biosynthesis. May increase the efficiency of translation by recycling ribosomes from one round of translation to another. In Rhodopirellula baltica (strain DSM 10527 / NCIMB 13988 / SH1), this protein is Ribosome-recycling factor.